The primary structure comprises 124 residues: uncharacterized protein (124 aa).

Transmembrane regions (helical) follow at residues 14-34 (KAIV…YGWQ), 41-61 (FSYG…IIFY), and 85-105 (MVFI…AFFV).

Its subcellular location is the cell membrane. This is an uncharacterized protein from Haemophilus influenzae (strain ATCC 51907 / DSM 11121 / KW20 / Rd).